The following is a 552-amino-acid chain: Phosphoribosylaminoimidazole carboxylase (552 aa).

Positions K108–C295 constitute an ATP-grasp domain. G134–A189 lines the ATP pocket.

The protein in the C-terminal section; belongs to the AIR carboxylase family. Class I subfamily.

The enzyme catalyses 5-amino-1-(5-phospho-D-ribosyl)imidazole-4-carboxylate + H(+) = 5-amino-1-(5-phospho-beta-D-ribosyl)imidazole + CO2. Its pathway is purine metabolism; IMP biosynthesis via de novo pathway; 5-amino-1-(5-phospho-D-ribosyl)imidazole-4-carboxylate from 5-amino-1-(5-phospho-D-ribosyl)imidazole (carboxylase route): step 1/1. This chain is Phosphoribosylaminoimidazole carboxylase (ade6), found in Schizosaccharomyces pombe (strain 972 / ATCC 24843) (Fission yeast).